A 265-amino-acid chain; its full sequence is 4-hydroxy-tetrahydrodipicolinate reductase (265 aa).

Residues 7-12 and D33 each bind NAD(+); that span reads GASGRM. An NADP(+)-binding site is contributed by R34. Residues 96–98 and 120–123 each bind NAD(+); these read GTT and AANM. H153 serves as the catalytic Proton donor/acceptor. A (S)-2,3,4,5-tetrahydrodipicolinate-binding site is contributed by H154. Catalysis depends on K157, which acts as the Proton donor. (S)-2,3,4,5-tetrahydrodipicolinate is bound at residue 163 to 164; it reads GT.

The protein belongs to the DapB family.

The protein resides in the cytoplasm. The enzyme catalyses (S)-2,3,4,5-tetrahydrodipicolinate + NAD(+) + H2O = (2S,4S)-4-hydroxy-2,3,4,5-tetrahydrodipicolinate + NADH + H(+). It catalyses the reaction (S)-2,3,4,5-tetrahydrodipicolinate + NADP(+) + H2O = (2S,4S)-4-hydroxy-2,3,4,5-tetrahydrodipicolinate + NADPH + H(+). The protein operates within amino-acid biosynthesis; L-lysine biosynthesis via DAP pathway; (S)-tetrahydrodipicolinate from L-aspartate: step 4/4. In terms of biological role, catalyzes the conversion of 4-hydroxy-tetrahydrodipicolinate (HTPA) to tetrahydrodipicolinate. This Burkholderia cenocepacia (strain ATCC BAA-245 / DSM 16553 / LMG 16656 / NCTC 13227 / J2315 / CF5610) (Burkholderia cepacia (strain J2315)) protein is 4-hydroxy-tetrahydrodipicolinate reductase.